Consider the following 770-residue polypeptide: MAQWNQLQQLDTRYLEQLHQLYSDSFPMELRQFLAPWIESQDWAYAASKESHATLVFHNLLGEIDQQYSRFLQESNVLYQHNLRRIKQFLQSRYLEKPMEIARIVARCLWEESRLLQTAATAAQQGGQANHPTAAVVTEKQQMLEQHLQDVRKRVQDLEQKMKVVENLQDDFDFNYKTLKSQGDMQDLNGNNQSVTRQKMQQLEQMLTALDQMRRSIVSELAGLLSAMEYVQKTLTDEELADWKRRQQIACIGGPPNICLDRLENWITSLAESQLQTRQQIKKLEELQQKVSYKGDPIVQHRPMLEERIVELFRNLMKSAFVVERQPCMPMHPDRPLVIKTGVQFTTKVRLLVKFPELNYQLKIKVCIDKDSGDVAALRGSRKFNILGTNTKVMNMEESNNGSLSAEFKHLTLREQRCGNGGRANCDASLIVTEELHLITFETEVYHQGLKIDLETHSLPVVVISNICQMPNAWASILWYNMLTNNPKNVNFFTKPPIGTWDQVAEVLSWQFSSTTKRGLSIEQLTTLAEKLLGPGVNYSGCQITWAKFCKENMAGKGFSFWVWLDNIIDLVKKYILALWNEGYIMGFISKERERAILSTKPPGTFLLRFSESSKEGGVTFTWVEKDISGKTQIQSVEPYTKQQLNNMSFAEIIMGYKIMDATNILVSPLVYLYPDIPKEEAFGKYCRPESQEHPEADPGSAAPYLKTKFICVTPTTCSNTIDLPMSPRTLDSLMQFGNNGEGAEPSAGGQFESLTFDMDLTSECATSPM.

A2 carries the post-translational modification N-acetylalanine. Residues K49 and K87 each carry the N6-acetyllysine modification. An Essential for nuclear import motif is present at residues 150-162 (DVRKRVQDLEQKM). The region spanning 580–670 (WNEGYIMGFI…DATNILVSPL (91 aa)) is the SH2 domain. Allysine; alternate is present on residues K601, K615, and K631. N6-acetyllysine; alternate is present on residues K601, K615, and K631. Y640 is modified (phosphotyrosine; by TYK2). Allysine; alternate is present on K685. K685 is modified (N6-acetyllysine; alternate). Residue Y705 is modified to Phosphotyrosine; by FER and PTK6. The residue at position 707 (K707) is an N6-acetyllysine. Residue T714 is modified to Phosphothreonine. S727 bears the Phosphoserine; by DYRK2, NLK, NEK6, IRAK1, RPS6KA5, ZIPK/DAPK3 and PKC/PRKCE mark.

It belongs to the transcription factor STAT family. Forms a homodimer or a heterodimer with a related family member (at least STAT1). Component of a promoter-binding complex composed of STAT3, NFATC3 and NFATC4; complex formation is enhanced by calcineurin. Interacts with IL31RA, NCOA1, PELP1, SIPAR, SOCS7, STATIP1 and TMF1. Interacts with IL23R in presence of IL23. Interacts (via SH2 domain) with NLK. Interacts with ARL2BP; the interaction is enhanced by LIF and JAK1 expression. Interacts with KPNA4 and KPNA5; KPNA4 may be the primary mediator of nuclear import. Interacts with CAV2; the interaction is increased on insulin-induced tyrosine phosphorylation of CAV2 and leads to STAT3 activation. Interacts with ARL2BP; interaction is enhanced with ARL2. Interacts with NEK6. Binds to CDK9 when activated and nuclear. Interacts with BMX. Interacts with ZIPK/DAPK3. Interacts with PIAS3; the interaction occurs on stimulation by IL6, CNTF or OSM and inhibits the DNA binding activity of STAT3. In prostate cancer cells, interacts with PRKCE and promotes DNA binding activity of STAT3. Interacts with STMN3, antagonizing its microtubule-destabilizing activity. Interacts with the 'Lys-129' acetylated form of BIRC5/survivin. Interacts with FER. Interacts (via SH2 domain) with EIF2AK2/PKR (via the kinase catalytic domain). Interacts with FGFR4. Interacts with INPP5F; the interaction is independent of STAT3 Tyr-705 phosphorylation status. Interacts with OCIAD1. Interacts with OCIAD2. Interacts (unphosphorylated or phosphorylated at Ser-727) with PHB1. Interacts and may form heterodimers with NHLH1. Found in a complex with SLC39A6, SLC39A10 and with the 'Ser-727' phosphorylated form of STAT3 throughout mitosis. Interacts (when acetylated) with EP300 (via bromo domain); interaction takes place following STAT3 acetylation by EP300 and promotes enhanceosome assembly. Interacts (when acetylated) with BRD2 (via bromo domain); interaction promotes STAT3 recruitment to chromatin and T-helper Th17 cell differentiation. Interacts with FAM220A/SIPAR; the interaction occurs in both the nucleus and the cytoplasm, is enhanced by IL6 and promotes STAT3 dephosphorylation. Interacts in both unphosphorylated and phosphorylated forms with FAM220A but interacts preferentially in the phosphorylated form in the nucleus. Interacts with PTPN2; the interaction is promoted by FAM220A and leads to STAT3 dephosphorylation which negatively regulates STAT3 transcriptional activator activity. Post-translationally, activated through tyrosine phosphorylation by BMX. Tyrosine phosphorylated in response to IL6, IL11, CNTF, LIF, KITLG/SCF, CSF1, EGF, PDGF, IFN-alpha, LEP and OSM. Activated KIT promotes phosphorylation on tyrosine residues and subsequent translocation to the nucleus. Tyrosine phosphorylated in response to constitutively activated FGFR1, FGFR2, FGFR3 and FGFR4. Phosphorylated on serine upon DNA damage, probably by ATM or ATR. Serine phosphorylation is important for the formation of stable DNA-binding STAT3 homodimers and maximal transcriptional activity. ARL2BP may participate in keeping the phosphorylated state of STAT3 within the nucleus. Tyrosine phosphorylated upon stimulation with EGF. Upon LPS challenge, phosphorylated within the nucleus by IRAK1. Upon UV-A treatment, phosphorylated on Ser-727 by RPS6KA5. Dephosphorylation on tyrosine residues by PTPN2 negatively regulates IL6/interleukin-6 signaling. Phosphorylation at Tyr-705 by PTK6, isoform M2 of PKM (PKM2) or FER leads to an increase of its transcriptional activity. Phosphorylation at Tyr-705 is increased in the presence of calcineurin. Phosphorylation at Tyr-640 by TYK2 negatively regulates transcriptional activity. Acetylated on lysine residues by EP300/p300, promoting its activation. Acetylation at Lys-49 and Lys-87 by EP300/p300 promotes its activation. Acetylation at Lys-87 by EP300/p300 promotes its association with BRD2 and recruitment to chromatin. Deacetylated at Lys-49 and Lys-87 by HDAC1. Acetylation at Lys-685 by EP300/p300 promotes its homodimerization and activation. Deacetylated at Lys-685 by HDAC3. Acetylated on lysine residues by CREBBP. Deacetylation by LOXL3 leads to disrupt STAT3 dimerization and inhibit STAT3 transcription activity. Oxidation of lysine residues to allysine on STAT3 preferentially takes place on lysine residues that are acetylated. In terms of processing, some lysine residues are oxidized to allysine by LOXL3, leading to disrupt STAT3 dimerization and inhibit STAT3 transcription activity. Oxidation of lysine residues to allysine on STAT3 preferentially takes place on lysine residues that are acetylated. Post-translationally, (Microbial infection) Phosphorylated on Tyr-705 in the presence of S.typhimurium SarA. As to expression, expressed in ventricular cardiomyocytes (at protein level). Expressed in the lung (at protein level). Expressed in the liver, spleen and kidney. In terms of tissue distribution, expressed in the liver.

Its subcellular location is the cytoplasm. It is found in the nucleus. Functionally, signal transducer and transcription activator that mediates cellular responses to interleukins, KITLG/SCF, LEP and other growth factors. Once activated, recruits coactivators, such as NCOA1 or MED1, to the promoter region of the target gene. May mediate cellular responses to activated FGFR1, FGFR2, FGFR3 and FGFR4. Upon activation of IL6ST/gp130 signaling by interleukin-6 (IL6), binds to the IL6-responsive elements identified in the promoters of various acute-phase protein genes. Activated by IL31 through IL31RA. Acts as a regulator of inflammatory response by regulating differentiation of naive CD4(+) T-cells into T-helper Th17 or regulatory T-cells (Treg): acetylation promotes its transcription activity and cell differentiation while deacetylation and oxidation of lysine residues by LOXL3 inhibits differentiation. Involved in cell cycle regulation by inducing the expression of key genes for the progression from G1 to S phase, such as CCND1. Mediates the effects of LEP on melanocortin production, body energy homeostasis and lactation. May play an apoptotic role by transctivating BIRC5 expression under LEP activation. Cytoplasmic STAT3 represses macroautophagy by inhibiting EIF2AK2/PKR activity. Plays a crucial role in basal beta cell functions, such as regulation of insulin secretion. Following JAK/STAT signaling activation and as part of a complex with NFATC3 and NFATC4, binds to the alpha-beta E4 promoter region of CRYAB and activates transcription in cardiomyocytes. Plays an important role in host defense in methicillin-resistant S.aureus lung infection by regulating the expression of the antimicrobial lectin REG3G. In Mus musculus (Mouse), this protein is Signal transducer and activator of transcription 3.